Here is a 311-residue protein sequence, read N- to C-terminus: Methionyl-tRNA formyltransferase (311 aa).

Position 110 to 113 (110 to 113 (SLLP)) interacts with (6S)-5,6,7,8-tetrahydrofolate.

Belongs to the Fmt family.

The catalysed reaction is L-methionyl-tRNA(fMet) + (6R)-10-formyltetrahydrofolate = N-formyl-L-methionyl-tRNA(fMet) + (6S)-5,6,7,8-tetrahydrofolate + H(+). Its function is as follows. Attaches a formyl group to the free amino group of methionyl-tRNA(fMet). The formyl group appears to play a dual role in the initiator identity of N-formylmethionyl-tRNA by promoting its recognition by IF2 and preventing the misappropriation of this tRNA by the elongation apparatus. The polypeptide is Methionyl-tRNA formyltransferase (Streptococcus pneumoniae (strain JJA)).